The primary structure comprises 429 residues: 4-hydroxyphenylacetate degradation bifunctional isomerase/decarboxylase (429 aa).

Approximate repeat units lie at residues 1–215 (MKGT…NQTF) and 216–429 (TWPL…ESAN). 3 residues coordinate a divalent metal cation: E276, E278, and D307.

Belongs to the FAH family. In terms of assembly, monomer. Mg(2+) is required as a cofactor.

The catalysed reaction is (2E,4Z)-5-hydroxypenta-2,4-diene-1,2,5-tricarboxylate = (3E,5R)-5-carboxy-2-oxohept-3-enedioate. It catalyses the reaction (3E,5R)-5-carboxy-2-oxohept-3-enedioate + H(+) = (4Z)-2-oxohept-4-enedioate + CO2. The protein operates within aromatic compound metabolism; 4-hydroxyphenylacetate degradation; pyruvate and succinate semialdehyde from 4-hydroxyphenylacetate: step 4/7. Its pathway is aromatic compound metabolism; 4-hydroxyphenylacetate degradation; pyruvate and succinate semialdehyde from 4-hydroxyphenylacetate: step 5/7. In terms of biological role, decarboxylates OPET (5-oxo-pent-3-ene-1,2,5-tricarboxylic acid) into HHDD (2-hydroxy-hept-2,4-diene-1,7-dioate) and isomerizes it to OHED (2-oxo-hept-3-ene-1,7-dioate). This Salmonella dublin protein is 4-hydroxyphenylacetate degradation bifunctional isomerase/decarboxylase (hpaG).